The sequence spans 190 residues: Potassium-transporting ATPase KdpC subunit (190 aa).

A helical membrane pass occupies residues 10–30; sequence TFIFLLLITGGVYPLLTTVLG.

This sequence belongs to the KdpC family. The system is composed of three essential subunits: KdpA, KdpB and KdpC.

The protein localises to the cell inner membrane. Part of the high-affinity ATP-driven potassium transport (or Kdp) system, which catalyzes the hydrolysis of ATP coupled with the electrogenic transport of potassium into the cytoplasm. This subunit acts as a catalytic chaperone that increases the ATP-binding affinity of the ATP-hydrolyzing subunit KdpB by the formation of a transient KdpB/KdpC/ATP ternary complex. This Escherichia coli (strain K12 / MC4100 / BW2952) protein is Potassium-transporting ATPase KdpC subunit.